We begin with the raw amino-acid sequence, 644 residues long: ATP-dependent zinc metalloprotease FtsH (644 aa).

Topologically, residues 1–13 (MANNDNKHRRSMS) are cytoplasmic. A helical membrane pass occupies residues 14 to 34 (MLLYIAVAIFVYLLLSNTLLP). Residues 35 to 117 (GLLRQQIQTV…SIPDNSANML (83 aa)) lie on the Extracellular side of the membrane. A helical transmembrane segment spans residues 118 to 138 (MYALIQYGIPLIIFLGIGFFI). Residues 139–644 (NRSLKRAMGD…DEGSSTPSEE (506 aa)) are Cytoplasmic-facing. Position 224 to 231 (224 to 231 (GPPGTGKT)) interacts with ATP. His-445 is a binding site for Zn(2+). Glu-446 is an active-site residue. Zn(2+) contacts are provided by His-449 and Asp-522.

The protein in the central section; belongs to the AAA ATPase family. It in the C-terminal section; belongs to the peptidase M41 family. In terms of assembly, homohexamer. Zn(2+) is required as a cofactor.

It localises to the cell membrane. Its function is as follows. Acts as a processive, ATP-dependent zinc metallopeptidase for both cytoplasmic and membrane proteins. Plays a role in the quality control of integral membrane proteins. The protein is ATP-dependent zinc metalloprotease FtsH of Lancefieldella parvula (strain ATCC 33793 / DSM 20469 / CCUG 32760 / JCM 10300 / KCTC 3663 / VPI 0546 / 1246) (Atopobium parvulum).